Here is a 78-residue protein sequence, read N- to C-terminus: Acyl carrier protein (78 aa).

Residues 2 to 77 (STIEERVKKI…AAIDFIQANQ (76 aa)) form the Carrier domain. Ser37 is subject to O-(pantetheine 4'-phosphoryl)serine.

It belongs to the acyl carrier protein (ACP) family. Post-translationally, 4'-phosphopantetheine is transferred from CoA to a specific serine of apo-ACP by AcpS. This modification is essential for activity because fatty acids are bound in thioester linkage to the sulfhydryl of the prosthetic group.

The protein localises to the cytoplasm. The protein operates within lipid metabolism; fatty acid biosynthesis. Its function is as follows. Carrier of the growing fatty acid chain in fatty acid biosynthesis. This is Acyl carrier protein from Pectobacterium atrosepticum (strain SCRI 1043 / ATCC BAA-672) (Erwinia carotovora subsp. atroseptica).